Consider the following 458-residue polypeptide: Ammonium transporter Rh type B (458 aa).

The Cytoplasmic portion of the chain corresponds to M1–L13. Residues Q14 to V34 traverse the membrane as a helical segment. The Extracellular segment spans residues R35 to Y61. A glycan (N-linked (GlcNAc...) asparagine) is linked at N49. A helical transmembrane segment spans residues P62–L82. The Cytoplasmic segment spans residues Q83–G86. The helical transmembrane segment at F87–V107 threads the bilayer. The Extracellular segment spans residues Q108–E124. A helical membrane pass occupies residues S125–G145. Residues K146–P149 are Cytoplasmic-facing. Residues A150–L170 traverse the membrane as a helical segment. Residues L171–D178 lie on the Extracellular side of the membrane. Residues A179–Y201 traverse the membrane as a helical segment. Residues R202–D219 are Cytoplasmic-facing. Residues L220–L240 form a helical membrane-spanning segment. Residues T241–A251 lie on the Extracellular side of the membrane. A helical transmembrane segment spans residues L252–V272. The Cytoplasmic portion of the chain corresponds to G273–H282. The chain crosses the membrane as a helical span at residues I283 to T303. P304 is a topological domain (extracellular). A helical membrane pass occupies residues F305–F325. Topologically, residues T326 to G346 are cytoplasmic. Residues M347 to A367 traverse the membrane as a helical segment. At Y368 to Q393 the chain is on the extracellular side. Residues L394–L414 form a helical membrane-spanning segment. Residues L415 to A458 are Cytoplasmic-facing. The interaction with ANK3 stretch occupies residues K416 to P424. The Basolateral sorting signal signature appears at Y429–Q432. The segment at G439–A458 is disordered.

It belongs to the ammonium transporter (TC 2.A.49) family. Rh subfamily. In terms of assembly, interacts (via C-terminus) with ANK2 and ANK3; required for targeting to the basolateral membrane. In terms of processing, N-glycosylated.

Its subcellular location is the cell membrane. The protein localises to the basolateral cell membrane. The enzyme catalyses NH4(+)(in) = NH4(+)(out). The catalysed reaction is methylamine(out) = methylamine(in). It carries out the reaction CO2(out) = CO2(in). Ammonium transporter involved in the maintenance of acid-base homeostasis. Transports ammonium and its related derivative methylammonium across the basolateral plasma membrane of epithelial cells likely contributing to renal transepithelial ammonia transport and ammonia metabolism. May transport either NH4(+) or NH3 ammonia species predominantly mediating an electrogenic NH4(+) transport. May act as a CO2 channel providing for renal acid secretion. The polypeptide is Ammonium transporter Rh type B (RHBG) (Gorilla gorilla gorilla (Western lowland gorilla)).